The following is a 698-amino-acid chain: Probable xyloglucan glycosyltransferase 2 (698 aa).

Helical transmembrane passes span 124–144 (GFLA…WNGW) and 190–210 (ILLF…CFWI). Residue D272 is part of the active site. Positions 331 and 333 each coordinate substrate. D425 is a catalytic residue. Helical transmembrane passes span 503–523 (LILP…TMFV), 528–548 (LPVW…ILPS), 653–668 (LALS…RSLL), and 673–693 (IHFY…LDLI).

It belongs to the glycosyltransferase 2 family. Plant cellulose synthase-like C subfamily.

It localises to the golgi apparatus membrane. In terms of biological role, probable beta-1,4-glucan synthase rather involved in the synthesis of the xyloglucan backbone than cellulose. Seems to work simultaneously with xyloglucan 6-xylosyltransferase. Xyloglucan is a noncellulosic polysaccharides of plant cell wall and consists of a glucan backbone substituted by xylose, galactose and fucose. The sequence is that of Probable xyloglucan glycosyltransferase 2 (CSLC2) from Oryza sativa subsp. indica (Rice).